Consider the following 98-residue polypeptide: NADH-ubiquinone oxidoreductase chain 4L (98 aa).

3 helical membrane-spanning segments follow: residues proline 2–phenylalanine 22, serine 29–leucine 49, and isoleucine 61–valine 81.

The protein belongs to the complex I subunit 4L family. Core subunit of respiratory chain NADH dehydrogenase (Complex I) which is composed of 45 different subunits.

Its subcellular location is the mitochondrion inner membrane. It carries out the reaction a ubiquinone + NADH + 5 H(+)(in) = a ubiquinol + NAD(+) + 4 H(+)(out). Its function is as follows. Core subunit of the mitochondrial membrane respiratory chain NADH dehydrogenase (Complex I) which catalyzes electron transfer from NADH through the respiratory chain, using ubiquinone as an electron acceptor. Part of the enzyme membrane arm which is embedded in the lipid bilayer and involved in proton translocation. This chain is NADH-ubiquinone oxidoreductase chain 4L (MT-ND4L), found in Eulemur mongoz (Mongoose lemur).